Consider the following 230-residue polypeptide: Transmembrane protein 221 (230 aa).

The next 4 helical transmembrane spans lie at 12 to 32, 73 to 93, 125 to 145, and 147 to 167; these read AMTL…QLLF, ALAA…ALCG, LFCC…LLLF, and IEAG…LVAI. The disordered stretch occupies residues 184 to 230; sequence RELSPPSFEDEPARPSEDSKSGCRAQPPQDEETETPIGAVTHQGSHF. Over residues 194–204 the composition is skewed to basic and acidic residues; it reads EPARPSEDSKS.

It is found in the membrane. This chain is Transmembrane protein 221 (Tmem221), found in Mus musculus (Mouse).